Reading from the N-terminus, the 390-residue chain is Ureide permease 1 (390 aa).

Residues 1–9 (MYMIESKGG) lie on the Extracellular side of the membrane. Residues 10-30 (AIACMLLALLFLGTWPAIMTL) traverse the membrane as a helical segment. Residues 31 to 44 (TERRGRLPQHTYLD) lie on the Cytoplasmic side of the membrane. A helical transmembrane segment spans residues 45 to 65 (YTLTNLLAAVIIALTLGEIGP). Over 66–78 (SRPNFFTQLSQDN) the chain is Extracellular. A helical transmembrane segment spans residues 79–99 (WQSVMFAMAGGIVLSLGNLAT). Residues 100-101 (QY) lie on the Cytoplasmic side of the membrane. Residues 102–122 (AWAYVGLSVTEVITASITVVI) traverse the membrane as a helical segment. Residues 123–136 (GTTLNYFLDDRINR) lie on the Extracellular side of the membrane. The helical transmembrane segment at 137-157 (AEVLFPGVACFLIAVCFGSAV) threads the bilayer. Topologically, residues 158 to 221 (HKSNAADNKT…RAIKVFGKST (64 aa)) are cytoplasmic. Residue 213–220 (AIKVFGKS) participates in ATP binding. The helical transmembrane segment at 222–242 (IIGLVITFFAGICFSLFSPAF) threads the bilayer. Over 243 to 261 (NLATNDQWHTLKHGVPKLN) the chain is Extracellular. Residues 262 to 282 (VYTAFFYFSISAFVVALILNI) form a helical membrane-spanning segment. The Cytoplasmic segment spans residues 283 to 307 (RFLYWPILGLPRSSFKAYLNDWNGR). A helical transmembrane segment spans residues 308-328 (GWSFLAGFLCGFGNGLQFMGG). At 329–333 (QAAGY) the chain is on the extracellular side. A helical transmembrane segment spans residues 334–354 (AAADAVQALPLVSTFWGILLF). The Cytoplasmic portion of the chain corresponds to 355–363 (GEYRRSSRK). The chain crosses the membrane as a helical span at residues 364–384 (TYTLLISMLLMFIVAVAVLMA). At 385–390 (SSGHRK) the chain is on the extracellular side.

This sequence belongs to the plant ureide permease (TC 2.A.7.19) family. As to expression, expressed in leaves, flowers, roots and stems.

The protein resides in the membrane. In terms of biological role, proton-coupled transporter that transports a wide spectrum of oxo derivatives of heterocyclic nitrogen compounds, including allantoin, uric acid and xanthine, but not adenine. Mediates high affinity transport of uracil and 5-fluorouracil (a toxic uracil analog). Mediates transport of free pyrimidines and may function during early seedling development in salvage pathways, by the utilization of pyrimidines from seed storage tissue. This chain is Ureide permease 1, found in Arabidopsis thaliana (Mouse-ear cress).